Here is a 292-residue protein sequence, read N- to C-terminus: NAD kinase (292 aa).

Asp73 functions as the Proton acceptor in the catalytic mechanism. NAD(+) is bound by residues 73-74 (DG), 147-148 (NE), His158, Arg175, Asp177, 188-193 (TAYSLS), and Gln247.

This sequence belongs to the NAD kinase family. A divalent metal cation serves as cofactor.

Its subcellular location is the cytoplasm. It catalyses the reaction NAD(+) + ATP = ADP + NADP(+) + H(+). In terms of biological role, involved in the regulation of the intracellular balance of NAD and NADP, and is a key enzyme in the biosynthesis of NADP. Catalyzes specifically the phosphorylation on 2'-hydroxyl of the adenosine moiety of NAD to yield NADP. The chain is NAD kinase from Edwardsiella ictaluri (strain 93-146).